A 254-amino-acid polypeptide reads, in one-letter code: UPF0246 protein FTM_0239 (254 aa).

Belongs to the UPF0246 family.

This Francisella tularensis subsp. mediasiatica (strain FSC147) protein is UPF0246 protein FTM_0239.